Reading from the N-terminus, the 475-residue chain is tRNA-2-methylthio-N(6)-dimethylallyladenosine synthase (475 aa).

Positions Ala-2–Ser-119 constitute an MTTase N-terminal domain. Residues Cys-11, Cys-48, Cys-82, Cys-156, Cys-160, and Cys-163 each coordinate [4Fe-4S] cluster. One can recognise a Radical SAM core domain in the interval Lys-142 to Gln-374. In terms of domain architecture, TRAM spans Arg-377–Arg-440.

The protein belongs to the methylthiotransferase family. MiaB subfamily. In terms of assembly, monomer. [4Fe-4S] cluster is required as a cofactor.

It is found in the cytoplasm. The catalysed reaction is N(6)-dimethylallyladenosine(37) in tRNA + (sulfur carrier)-SH + AH2 + 2 S-adenosyl-L-methionine = 2-methylsulfanyl-N(6)-dimethylallyladenosine(37) in tRNA + (sulfur carrier)-H + 5'-deoxyadenosine + L-methionine + A + S-adenosyl-L-homocysteine + 2 H(+). Functionally, catalyzes the methylthiolation of N6-(dimethylallyl)adenosine (i(6)A), leading to the formation of 2-methylthio-N6-(dimethylallyl)adenosine (ms(2)i(6)A) at position 37 in tRNAs that read codons beginning with uridine. This chain is tRNA-2-methylthio-N(6)-dimethylallyladenosine synthase, found in Haemophilus ducreyi (strain 35000HP / ATCC 700724).